The primary structure comprises 123 residues: MRIAGVDLPSQKKLEVALTYLYGIGKTLAKEILEACQLSPDLRVRDVNDEQSMRLRQYIEQKYLIESDLKRVESMNIKRLMDIGCYRGRRHRALLPVRGQRTRSNARTRRGAKKTVAGKKLAK.

Residues 99–123 form a disordered region; the sequence is GQRTRSNARTRRGAKKTVAGKKLAK. A compositionally biased stretch (basic residues) spans 100-123; sequence QRTRSNARTRRGAKKTVAGKKLAK.

Belongs to the universal ribosomal protein uS13 family. Part of the 30S ribosomal subunit.

It localises to the plastid. It is found in the chloroplast. Located at the top of the head of the 30S subunit, it contacts several helices of the 16S rRNA. The polypeptide is Small ribosomal subunit protein uS13c (Cyanidioschyzon merolae (strain NIES-3377 / 10D) (Unicellular red alga)).